Here is a 118-residue protein sequence, read N- to C-terminus: Large ribosomal subunit protein bL20 (118 aa).

This sequence belongs to the bacterial ribosomal protein bL20 family.

In terms of biological role, binds directly to 23S ribosomal RNA and is necessary for the in vitro assembly process of the 50S ribosomal subunit. It is not involved in the protein synthesizing functions of that subunit. This chain is Large ribosomal subunit protein bL20, found in Hydrogenovibrio crunogenus (strain DSM 25203 / XCL-2) (Thiomicrospira crunogena).